Reading from the N-terminus, the 180-residue chain is Shikimate kinase (180 aa).

14–19 (GAGKSC) contacts ATP. Ser-18 provides a ligand contact to Mg(2+). 3 residues coordinate substrate: Asp-36, Arg-60, and Gly-82. Arg-120 contributes to the ATP binding site. Arg-139 lines the substrate pocket.

The protein belongs to the shikimate kinase family. In terms of assembly, monomer. The cofactor is Mg(2+).

The protein localises to the cytoplasm. It catalyses the reaction shikimate + ATP = 3-phosphoshikimate + ADP + H(+). It participates in metabolic intermediate biosynthesis; chorismate biosynthesis; chorismate from D-erythrose 4-phosphate and phosphoenolpyruvate: step 5/7. Its function is as follows. Catalyzes the specific phosphorylation of the 3-hydroxyl group of shikimic acid using ATP as a cosubstrate. The sequence is that of Shikimate kinase from Xanthomonas campestris pv. campestris (strain 8004).